The primary structure comprises 175 residues: Zinc metalloproteinase-disintegrin-like catroriarin (175 aa).

A Disintegrin domain is found at 1–63 (NPCCDAATCK…ECPADVFHKN (63 aa)). 9 disulfides stabilise this stretch: cysteine 3–cysteine 26, cysteine 17–cysteine 23, cysteine 22–cysteine 48, cysteine 35–cysteine 55, cysteine 42–cysteine 74, cysteine 67–cysteine 79, cysteine 101–cysteine 147, cysteine 114–cysteine 124, and cysteine 131–cysteine 171. The D/ECD-tripeptide signature appears at 41 to 43 (ECD). Ca(2+) is bound by residues aspartate 43, proline 44, glutamate 46, aspartate 58, and valine 59.

Belongs to the venom metalloproteinase (M12B) family. P-III subfamily. P-IIIa sub-subfamily. Monomer. It depends on Zn(2+) as a cofactor. Post-translationally, glycosylated. As to expression, expressed by the venom gland.

The protein localises to the secreted. Snake venom metalloproteinase that impairs hemostasis in the envenomed animal. The polypeptide is Zinc metalloproteinase-disintegrin-like catroriarin (Crotalus atrox (Western diamondback rattlesnake)).